The primary structure comprises 427 residues: Peptidase B (427 aa).

K195 and D200 together coordinate Mn(2+). K207 is a catalytic residue. Residues D218, D277, and E279 each contribute to the Mn(2+) site. R281 is an active-site residue.

The protein belongs to the peptidase M17 family. In terms of assembly, homohexamer. The cofactor is Mn(2+).

It localises to the cytoplasm. It catalyses the reaction Release of an N-terminal amino acid, Xaa, from a peptide or arylamide. Xaa is preferably Glu or Asp but may be other amino acids, including Leu, Met, His, Cys and Gln.. In terms of biological role, probably plays an important role in intracellular peptide degradation. The polypeptide is Peptidase B (Escherichia coli O127:H6 (strain E2348/69 / EPEC)).